A 498-amino-acid polypeptide reads, in one-letter code: UDP-N-acetylmuramoylalanine--D-glutamate ligase (498 aa).

119-125 (GTNGKST) lines the ATP pocket.

It belongs to the MurCDEF family.

Its subcellular location is the cytoplasm. The enzyme catalyses UDP-N-acetyl-alpha-D-muramoyl-L-alanine + D-glutamate + ATP = UDP-N-acetyl-alpha-D-muramoyl-L-alanyl-D-glutamate + ADP + phosphate + H(+). It participates in cell wall biogenesis; peptidoglycan biosynthesis. Its function is as follows. Cell wall formation. Catalyzes the addition of glutamate to the nucleotide precursor UDP-N-acetylmuramoyl-L-alanine (UMA). The polypeptide is UDP-N-acetylmuramoylalanine--D-glutamate ligase (Wolbachia sp. subsp. Brugia malayi (strain TRS)).